We begin with the raw amino-acid sequence, 427 residues long: NAD kinase 2, mitochondrial (427 aa).

A mitochondrion-targeting transit peptide spans 1–33; the sequence is MSLCLRLLCSVCGAAALRVPLGVSSLRALSGSA.

The protein belongs to the NAD kinase family. Homodimer.

The protein localises to the mitochondrion. The catalysed reaction is NAD(+) + ATP = ADP + NADP(+) + H(+). Its function is as follows. Mitochondrial NAD(+) kinase that phosphorylates NAD(+) to yield NADP(+). Can use both ATP or inorganic polyphosphate as the phosphoryl donor. The protein is NAD kinase 2, mitochondrial (nadk2) of Xenopus tropicalis (Western clawed frog).